A 118-amino-acid polypeptide reads, in one-letter code: Large ribosomal subunit protein uL18 (118 aa).

The tract at residues 1–25 is disordered; the sequence is MISKPDKNKIRQKRHRRVRGKLSGT. The segment covering 10 to 20 has biased composition (basic residues); it reads IRQKRHRRVRG.

It belongs to the universal ribosomal protein uL18 family. Part of the 50S ribosomal subunit; part of the 5S rRNA/L5/L18/L25 subcomplex. Contacts the 5S and 23S rRNAs.

This is one of the proteins that bind and probably mediate the attachment of the 5S RNA into the large ribosomal subunit, where it forms part of the central protuberance. This is Large ribosomal subunit protein uL18 from Streptococcus pyogenes serotype M5 (strain Manfredo).